We begin with the raw amino-acid sequence, 104 residues long: Urease subunit beta (104 aa).

Belongs to the urease beta subunit family. As to quaternary structure, heterotrimer of UreA (gamma), UreB (beta) and UreC (alpha) subunits. Three heterotrimers associate to form the active enzyme.

Its subcellular location is the cytoplasm. It carries out the reaction urea + 2 H2O + H(+) = hydrogencarbonate + 2 NH4(+). The protein operates within nitrogen metabolism; urea degradation; CO(2) and NH(3) from urea (urease route): step 1/1. This chain is Urease subunit beta, found in Mycolicibacterium vanbaalenii (strain DSM 7251 / JCM 13017 / BCRC 16820 / KCTC 9966 / NRRL B-24157 / PYR-1) (Mycobacterium vanbaalenii).